The primary structure comprises 294 residues: Chelated iron transport system membrane protein YfeC (294 aa).

8 consecutive transmembrane segments (helical) span residues 17-37 (AIWV…YLML), 51-71 (VVPG…GAFF), 93-113 (AIIG…VSLN), 140-160 (IIIL…LAVF), 169-189 (IGLS…ACTV), 194-214 (TVGA…AYLL), 221-241 (LLII…YLSF), and 246-266 (ATGG…FFFA).

This sequence belongs to the ABC-3 integral membrane protein family.

It localises to the cell inner membrane. Part of an ATP-driven transport system YfeABC for chelated iron. This Yersinia pestis protein is Chelated iron transport system membrane protein YfeC (yfeC).